The sequence spans 317 residues: Cytochrome f (317 aa).

An N-terminal signal peptide occupies residues 1-34; the sequence is MKGLKNQIMKKTSLFICTLLFISSIVFHPKITFA. Residues Y35, C55, C58, and H59 each contribute to the heme site. A helical transmembrane segment spans residues 284–304; it reads VIGLIAFFIGVGLTQILLVLK.

This sequence belongs to the cytochrome f family. As to quaternary structure, the 4 large subunits of the cytochrome b6-f complex are cytochrome b6, subunit IV (17 kDa polypeptide, PetD), cytochrome f and the Rieske protein, while the 4 small subunits are PetG, PetL, PetM and PetN. The complex functions as a dimer. Heme is required as a cofactor.

The protein localises to the cellular thylakoid membrane. Component of the cytochrome b6-f complex, which mediates electron transfer between photosystem II (PSII) and photosystem I (PSI), cyclic electron flow around PSI, and state transitions. The protein is Cytochrome f of Prochlorococcus marinus (strain MIT 9301).